A 356-amino-acid polypeptide reads, in one-letter code: D-alanine--D-alanine ligase (356 aa).

In terms of domain architecture, ATP-grasp spans 134–339; it reads KQLFEHRGLP…YPELITKLIE (206 aa). 167-222 is a binding site for ATP; that stretch reads NDKLNYPVFVKPANLGSSVGISKCNNEAELKEGIKEAFQFDRKLVIEQGVNAREIE. The Mg(2+) site is built by Asp293, Glu306, and Asn308.

This sequence belongs to the D-alanine--D-alanine ligase family. The cofactor is Mg(2+). It depends on Mn(2+) as a cofactor.

The protein localises to the cytoplasm. It catalyses the reaction 2 D-alanine + ATP = D-alanyl-D-alanine + ADP + phosphate + H(+). The protein operates within cell wall biogenesis; peptidoglycan biosynthesis. Its function is as follows. Cell wall formation. This chain is D-alanine--D-alanine ligase, found in Staphylococcus aureus (strain Mu3 / ATCC 700698).